We begin with the raw amino-acid sequence, 367 residues long: Homeobox protein Nkx-6.1 (367 aa).

The interval 36-133 (YPAAYPPLPA…SSSSSSSASA (98 aa)) is disordered. 3 stretches are compositionally biased toward low complexity: residues 48-59 (PSSSSSSSSSSS), 78-91 (GGLS…QQLS), and 110-133 (ASGA…SASA). The interval 102–268 (LSRPSMPVAS…KYLAGPERAR (167 aa)) is repressor domain. An Asymmetric dimethylarginine modification is found at Arg189. The segment at residues 236–295 (RKHTRPTFSGQQIFALEKTFEQTKYLAGPERARLAYSLGMTESQVKVWFQNRRTKWRKKH) is a DNA-binding region (homeobox). The interval 294-367 (KHAAEMATAK…LHASEPESSS (74 aa)) is disordered. Positions 304 to 317 (KKQDSETERLKGAS) are enriched in basic and acidic residues. Positions 306–367 (QDSETERLKG…LHASEPESSS (62 aa)) are involved in DNA-binding.

In terms of tissue distribution, pancreatic beta cells.

It localises to the nucleus. Its function is as follows. Transcription factor which binds to specific A/T-rich DNA sequences in the promoter regions of a number of genes. Involved in the development of insulin-producing beta cells in the islets of Langerhans at the secondary transition. Together with NKX2-2 and IRX3 acts to restrict the generation of motor neurons to the appropriate region of the neural tube. Belongs to the class II proteins of neuronal progenitor factors, which are induced by SHH signals. This Homo sapiens (Human) protein is Homeobox protein Nkx-6.1 (NKX6-1).